The primary structure comprises 61 residues: Large ribosomal subunit protein bL32 (61 aa).

A compositionally biased stretch (basic residues) spans 1-16 (MAVPKRKTSPSKRGMR). Positions 1-39 (MAVPKRKTSPSKRGMRRSADALKAPTYIEDKNSGELRRP) are disordered. The span at 28–39 (IEDKNSGELRRP) shows a compositional bias: basic and acidic residues.

It belongs to the bacterial ribosomal protein bL32 family.

The protein is Large ribosomal subunit protein bL32 of Rhizobium meliloti (strain 1021) (Ensifer meliloti).